A 197-amino-acid polypeptide reads, in one-letter code: Ras-related protein RabG2 (197 aa).

Residues 13 to 20 (GDSAVGKT), 61 to 65 (DTAGQ), and 119 to 122 (NKCD) contribute to the GTP site. The tract at residues 175 to 197 (SKPSVVNPGSGGTSNTGGKKKFC) is disordered. Cys-197 carries the S-geranylgeranyl cysteine lipid modification.

It belongs to the small GTPase superfamily. Rab family.

It is found in the cell membrane. This Dictyostelium discoideum (Social amoeba) protein is Ras-related protein RabG2 (rabG2).